A 490-amino-acid chain; its full sequence is tRNA-guanine(15) transglycosylase (490 aa).

Aspartate 90 serves as the catalytic Nucleophile. 2 residues coordinate substrate: aspartate 125 and alanine 193. Residues cysteine 276, cysteine 278, and cysteine 281 each coordinate Zn(2+).

Belongs to the archaeosine tRNA-ribosyltransferase family. It depends on Zn(2+) as a cofactor.

The enzyme catalyses guanosine(15) in tRNA + 7-cyano-7-deazaguanine = 7-cyano-7-carbaguanosine(15) in tRNA + guanine. The protein operates within tRNA modification; archaeosine-tRNA biosynthesis. Exchanges the guanine residue with 7-cyano-7-deazaguanine (preQ0) at position 15 in the dihydrouridine loop (D-loop) of archaeal tRNAs. This Methanosarcina mazei (strain ATCC BAA-159 / DSM 3647 / Goe1 / Go1 / JCM 11833 / OCM 88) (Methanosarcina frisia) protein is tRNA-guanine(15) transglycosylase.